A 409-amino-acid chain; its full sequence is Microfibrillar-associated protein 3-like (409 aa).

An N-terminal signal peptide occupies residues 1–28 (MDRLKSHLTVCFLPSVPFLILVSTLATA). At 29–149 (KSVTNSTLNG…LRVIFTSGDM (121 aa)) the chain is on the extracellular side. 5 N-linked (GlcNAc...) asparagine glycosylation sites follow: Asn33, Asn37, Asn67, Asn111, and Asn135. One can recognise an Ig-like C2-type domain in the interval 47–141 (PVIIARTDHI…GTVNNTVTLR (95 aa)). Cys68 and Cys125 are joined by a disulfide. A helical membrane pass occupies residues 150 to 172 (GVYYMVVCLVAFTIVMVLNITRL). The Cytoplasmic portion of the chain corresponds to 173 to 409 (CMMSSHLKKT…NTCIIYESHV (237 aa)). Tyr287 is subject to Phosphotyrosine; by EGFR. Disordered regions lie at residues 292–311 (SLKR…LHEQ) and 320–385 (SVHP…VLPP). Residues Ser298, Ser303, Ser306, and Ser307 each carry the phosphoserine modification. The segment covering 339–355 (EVKDVEETELSAEHSPE) has biased composition (basic and acidic residues). Low complexity predominate over residues 363-377 (VTSTELTSEEPTPVE).

In terms of tissue distribution, highly expressed in testis.

It localises to the cell membrane. The protein localises to the nucleus. It is found in the cytoplasm. In terms of biological role, may participate in the nuclear signaling of EGFR and MAPK1/ERK2. May a have a role in metastasis. This chain is Microfibrillar-associated protein 3-like (MFAP3L), found in Homo sapiens (Human).